The chain runs to 239 residues: Octanoyl-[acyl-carrier-protein]:protein N-octanoyltransferase LIPT2, mitochondrial (239 aa).

A mitochondrion-targeting transit peptide spans 1-18 (MSVPVLRVRRLGLVGYAE). The 181-residue stretch at 37 to 217 (GSPGGALLLC…AFEEEFQCQL (181 aa)) folds into the BPL/LPL catalytic domain. Substrate-binding positions include 81–88 (RGGLITFH), 147–149 (AIG), and 160–162 (GLA). The Acyl-thioester intermediate role is filled by Cys178. The disordered stretch occupies residues 220-239 (EQNPEQNPVQNRPDRDAGPL).

Belongs to the LipB family.

The protein localises to the mitochondrion. It carries out the reaction octanoyl-[ACP] + L-lysyl-[protein] = N(6)-octanoyl-L-lysyl-[protein] + holo-[ACP] + H(+). It participates in protein modification; protein lipoylation via endogenous pathway; protein N(6)-(lipoyl)lysine from octanoyl-[acyl-carrier-protein]: step 1/2. Functionally, catalyzes the transfer of endogenously produced octanoic acid from octanoyl-acyl-carrier-protein (octanoyl-ACP) onto the lipoyl domains of lipoate-dependent enzymes such as the protein H of the glycine cleavage system (GCSH). Lipoyl-ACP can also act as a substrate although octanoyl-ACP is likely to be the physiological substrate. This chain is Octanoyl-[acyl-carrier-protein]:protein N-octanoyltransferase LIPT2, mitochondrial (lipt2), found in Xenopus tropicalis (Western clawed frog).